Reading from the N-terminus, the 155-residue chain is Small ribosomal subunit protein uS9 (155 aa).

This sequence belongs to the universal ribosomal protein uS9 family.

This is Small ribosomal subunit protein uS9 from Rhizobium etli (strain CIAT 652).